A 410-amino-acid chain; its full sequence is 2,3-bisphosphoglycerate-independent phosphoglycerate mutase (410 aa).

It belongs to the BPG-independent phosphoglycerate mutase family. A-PGAM subfamily.

The catalysed reaction is (2R)-2-phosphoglycerate = (2R)-3-phosphoglycerate. Its pathway is carbohydrate degradation; glycolysis; pyruvate from D-glyceraldehyde 3-phosphate: step 3/5. Its function is as follows. Catalyzes the interconversion of 2-phosphoglycerate and 3-phosphoglycerate. In Pyrococcus abyssi (strain GE5 / Orsay), this protein is 2,3-bisphosphoglycerate-independent phosphoglycerate mutase.